We begin with the raw amino-acid sequence, 332 residues long: Cysteine and histidine-rich domain-containing protein 1 (332 aa).

Position 2 is an N-acetylalanine (Ala-2). Residues Ala-2–Val-77 are interaction with PPP5C. Zn(2+) is bound by residues Cys-5, Cys-10, Cys-24, His-27, Cys-42, and Cys-43. CHORD domains follow at residues Cys-5–His-64 and Cys-157–His-216. Thr-47 carries the post-translational modification Phosphothreonine. Position 51 is a phosphoserine (Ser-51). The Zn(2+) site is built by Cys-59, His-64, Cys-157, Cys-162, Cys-176, His-179, Cys-194, Cys-195, Cys-211, and His-216. The segment at Asn-65–Glu-316 is interaction with HSP90AA1 and HSP90AB1. The CS domain occupies Val-227–Glu-316.

In terms of assembly, interacts with HSP90AA1, ROCK1 and ROCK2. Interacts with HSP90AB1 and PPP5C. As to expression, underexpressed in many breast and lung cancers.

Its function is as follows. Regulates centrosome duplication, probably by inhibiting the kinase activity of ROCK2. Proposed to act as co-chaperone for HSP90. May play a role in the regulation of NOD1 via a HSP90 chaperone complex. In vitro, has intrinsic chaperone activity. This function may be achieved by inhibiting association of ROCK2 with NPM1. Plays a role in ensuring the localization of the tyrosine kinase receptor EGFR to the plasma membrane, and thus ensures the subsequent regulation of EGFR activity and EGF-induced actin cytoskeleton remodeling. Involved in stress response. Prevents tumorigenesis. This chain is Cysteine and histidine-rich domain-containing protein 1 (CHORDC1), found in Homo sapiens (Human).